The sequence spans 84 residues: Cell division topological specificity factor (84 aa).

The protein belongs to the MinE family.

Its function is as follows. Prevents the cell division inhibition by proteins MinC and MinD at internal division sites while permitting inhibition at polar sites. This ensures cell division at the proper site by restricting the formation of a division septum at the midpoint of the long axis of the cell. The sequence is that of Cell division topological specificity factor from Desulfotalea psychrophila (strain LSv54 / DSM 12343).